Reading from the N-terminus, the 369-residue chain is Glutamate 5-kinase (369 aa).

Lysine 9 serves as a coordination point for ATP. Residues serine 49, aspartate 136, and asparagine 148 each contribute to the substrate site. ATP is bound by residues 168–169 and 210–216; these read TD and TGGMLTK. The 81-residue stretch at 275-355 folds into the PUA domain; the sequence is QGSIWVDKGA…KGVLIYRDDW (81 aa).

The protein belongs to the glutamate 5-kinase family.

Its subcellular location is the cytoplasm. The catalysed reaction is L-glutamate + ATP = L-glutamyl 5-phosphate + ADP. It functions in the pathway amino-acid biosynthesis; L-proline biosynthesis; L-glutamate 5-semialdehyde from L-glutamate: step 1/2. In terms of biological role, catalyzes the transfer of a phosphate group to glutamate to form L-glutamate 5-phosphate. The protein is Glutamate 5-kinase of Streptococcus pneumoniae (strain ATCC 700669 / Spain 23F-1).